We begin with the raw amino-acid sequence, 156 residues long: Small ribosomal subunit protein uS7 (156 aa).

This sequence belongs to the universal ribosomal protein uS7 family. In terms of assembly, part of the 30S ribosomal subunit. Contacts proteins S9 and S11.

In terms of biological role, one of the primary rRNA binding proteins, it binds directly to 16S rRNA where it nucleates assembly of the head domain of the 30S subunit. Is located at the subunit interface close to the decoding center, probably blocks exit of the E-site tRNA. In Shewanella woodyi (strain ATCC 51908 / MS32), this protein is Small ribosomal subunit protein uS7.